Here is a 129-residue protein sequence, read N- to C-terminus: MARKTNTRKKRVKKNIEAGIAHIRSTFNNTIVTLTDTHGNALSWSSAGALGFRGSRKSTPFAAQMAAETAAKAAMEHGLKTLEVTVKGPGAGREAAIRALQAAGLEVTAIRDVTPVPHNGCRPPKRRRV.

The protein belongs to the universal ribosomal protein uS11 family. Part of the 30S ribosomal subunit. Interacts with proteins S7 and S18. Binds to IF-3.

Its function is as follows. Located on the platform of the 30S subunit, it bridges several disparate RNA helices of the 16S rRNA. Forms part of the Shine-Dalgarno cleft in the 70S ribosome. In Bacillus cereus (strain ATCC 14579 / DSM 31 / CCUG 7414 / JCM 2152 / NBRC 15305 / NCIMB 9373 / NCTC 2599 / NRRL B-3711), this protein is Small ribosomal subunit protein uS11.